Consider the following 90-residue polypeptide: Co-chaperonin GroES (90 aa).

Belongs to the GroES chaperonin family. Heptamer of 7 subunits arranged in a ring. Interacts with the chaperonin GroEL.

The protein localises to the cytoplasm. Together with the chaperonin GroEL, plays an essential role in assisting protein folding. The GroEL-GroES system forms a nano-cage that allows encapsulation of the non-native substrate proteins and provides a physical environment optimized to promote and accelerate protein folding. GroES binds to the apical surface of the GroEL ring, thereby capping the opening of the GroEL channel. The chain is Co-chaperonin GroES from Fusobacterium nucleatum subsp. polymorphum (Fusobacterium polymorphum).